The following is a 379-amino-acid chain: Heterogeneous nuclear ribonucleoprotein A3 (379 aa).

The residue at position 1 (Met1) is an N-acetylmethionine. The segment covering 1–10 (MEVKPPPGRP) has biased composition (pro residues). The interval 1–34 (MEVKPPPGRPQPDSGRRRRRRGEEGHDPKEPEQL) is disordered. Lys4 participates in a covalent cross-link: Glycyl lysine isopeptide (Lys-Gly) (interchain with G-Cter in SUMO2). A Phosphoserine modification is found at Ser14. Basic and acidic residues predominate over residues 21-34 (RGEEGHDPKEPEQL). Positions 35–118 (RKLFIGGLSF…RAVSREDSVK (84 aa)) constitute an RRM 1 domain. A Glycyl lysine isopeptide (Lys-Gly) (interchain with G-Cter in SUMO2) cross-link involves residue Lys36. The residue at position 43 (Ser43) is a Phosphoserine. Residue Arg52 is modified to Dimethylated arginine; alternate. The residue at position 52 (Arg52) is an Omega-N-methylarginine; alternate. Arg76 bears the Omega-N-methylarginine mark. Residues Ser112 and Ser116 each carry the phosphoserine modification. Lys118 participates in a covalent cross-link: Glycyl lysine isopeptide (Lys-Gly) (interchain with G-Cter in SUMO2). Residue Thr124 is modified to Phosphothreonine. An RRM 2 domain is found at 126-205 (KKIFVGGIKE…CEVKKALSKQ (80 aa)). Lys134 is subject to N6-acetyllysine; alternate. A Glycyl lysine isopeptide (Lys-Gly) (interchain with G-Cter in SUMO2); alternate cross-link involves residue Lys134. Residues Lys151 and Lys182 each participate in a glycyl lysine isopeptide (Lys-Gly) (interchain with G-Cter in SUMO2) cross-link. The disordered stretch occupies residues 204–225 (KQEMQSAGSQRGRGGGSGNFMG). Residues Arg214, Arg216, Arg226, Arg239, and Arg246 each carry the omega-N-methylarginine; alternate modification. Arg214, Arg216, Arg226, Arg239, and Arg246 each carry asymmetric dimethylarginine; alternate. Residues 214–225 (RGRGGGSGNFMG) are compositionally biased toward gly residues. Omega-N-methylarginine is present on Arg257. Arg286 is modified (asymmetric dimethylarginine). The interval 335–379 (NYSGQQQSNYGPMKGGSFGGRSSGSPYGGGYGSGGGSGGYGSRRF) is disordered. Over residues 347 to 379 (MKGGSFGGRSSGSPYGGGYGSGGGSGGYGSRRF) the composition is skewed to gly residues. Ser351 carries the post-translational modification Phosphoserine. Position 355 is an omega-N-methylarginine (Arg355). Residue Ser359 is modified to Phosphoserine. Residues Tyr361 and Tyr365 each carry the phosphotyrosine modification. Residues Ser367 and Ser371 each carry the phosphoserine modification. The residue at position 374 (Tyr374) is a Phosphotyrosine. At Ser376 the chain carries Phosphoserine.

As to quaternary structure, identified in the spliceosome C complex.

Its subcellular location is the nucleus. In terms of biological role, plays a role in cytoplasmic trafficking of RNA. Binds to the cis-acting response element, A2RE. May be involved in pre-mRNA splicing. The sequence is that of Heterogeneous nuclear ribonucleoprotein A3 (Hnrnpa3) from Mus musculus (Mouse).